We begin with the raw amino-acid sequence, 367 residues long: Heme A synthase (367 aa).

5 helical membrane passes run 25-45 (ALRF…LVGG), 111-131 (LIAR…WLTG), 139-159 (WPLV…WWMV), 174-194 (LATH…IMRG), and 210-230 (GFAA…ALVA). His-274 lines the heme pocket. 3 consecutive transmembrane segments (helical) span residues 276–296 (IGAY…LRAA), 305–325 (AVVL…TLLM), and 327–347 (VPLH…GFAI). His-335 serves as a coordination point for heme.

The protein belongs to the COX15/CtaA family. Type 2 subfamily. Interacts with CtaB. It depends on heme b as a cofactor.

The protein resides in the cell membrane. It catalyses the reaction Fe(II)-heme o + 2 A + H2O = Fe(II)-heme a + 2 AH2. The protein operates within porphyrin-containing compound metabolism; heme A biosynthesis; heme A from heme O: step 1/1. Catalyzes the conversion of heme O to heme A by two successive hydroxylations of the methyl group at C8. The first hydroxylation forms heme I, the second hydroxylation results in an unstable dihydroxymethyl group, which spontaneously dehydrates, resulting in the formyl group of heme A. The polypeptide is Heme A synthase (Rhizobium leguminosarum bv. trifolii (strain WSM2304)).